The chain runs to 560 residues: Poly(3-hydroxyalkanoate) polymerase 2 (560 aa).

The active site involves cysteine 296.

This sequence belongs to the PHA/PHB synthase family. Type II PhaC subfamily.

It functions in the pathway biopolymer metabolism; poly-(R)-3-hydroxybutanoate biosynthesis. In terms of biological role, synthesizes poly(3-hydroxyalkanoates) (PHA), complements a mutant of P.putida that does not make PHA. The chain is Poly(3-hydroxyalkanoate) polymerase 2 from Ectopseudomonas oleovorans (Pseudomonas oleovorans).